The following is a 372-amino-acid chain: MKYDLIIIGSGSVGAAAGYYATRAGLNVLMTDAHMPPHQHGSHHGDTRLIRHAYGEGEKYVPLVLRAQMLWDELSRHNEDDPIFVRSGVINLGPADSAFLANVAHSAEQWQLNVEKLDAQGIMARWPEIRVPDNYIGLFETDSGFLRSELAIKTWIQLAKEAGCAQLFNCPVTAIRHDDDGVTIETADGVYQAKKAIVCAGTWVKDLLPELPVQPVRKVFAWYQADGRYSVKNKFPAFTGELPNGDQYYGFPAENDALKIGKHNGGQVIHSADERVPFAEVVSDGSEAFPFLRNVLPGIGCCLYGAACTYDNSPDEDFIIDTLPGHDNTLLITGLSGHGFKFASVLGEIAADFAQDKKSDFDLTPFRLSRFQ.

4–34 (DLIIIGSGSVGAAAGYYATRAGLNVLMTDAH) contributes to the FAD binding site. Position 308 is an S-8alpha-FAD cysteine (cysteine 308).

This sequence belongs to the MSOX/MTOX family. MTOX subfamily. Monomer. The cofactor is FAD.

The enzyme catalyses N(alpha)-methyl-L-tryptophan + O2 + H2O = L-tryptophan + formaldehyde + H2O2. Its function is as follows. Catalyzes the oxidative demethylation of N-methyl-L-tryptophan. The sequence is that of N-methyl-L-tryptophan oxidase from Escherichia coli O81 (strain ED1a).